Here is a 282-residue protein sequence, read N- to C-terminus: NADH-ubiquinone oxidoreductase chain 2 (282 aa).

7 helical membrane passes run 17-37, 58-78, 87-107, 115-135, 166-186, 202-222, and 232-252; these read ILTNNVIVWWSIFLLMTVVFI, SLGLLFLLCSGGLLQFFIILL, FWIFNVTNNIFNYGLMWFLTF, ILLQIFWLSSVYILLFGLLIC, FSMFNTFYLFIYYFVLMVLLI, TTLVFLNIPFSVSFFVKIFSL, and FTLFLLFTMFLSVLAFSFWLI.

The protein belongs to the complex I subunit 2 family.

The protein localises to the mitochondrion inner membrane. It catalyses the reaction a ubiquinone + NADH + 5 H(+)(in) = a ubiquinol + NAD(+) + 4 H(+)(out). Its function is as follows. Core subunit of the mitochondrial membrane respiratory chain NADH dehydrogenase (Complex I) that is believed to belong to the minimal assembly required for catalysis. Complex I functions in the transfer of electrons from NADH to the respiratory chain. The immediate electron acceptor for the enzyme is believed to be ubiquinone. The sequence is that of NADH-ubiquinone oxidoreductase chain 2 from Caenorhabditis elegans.